The primary structure comprises 189 residues: GMP synthase [glutamine-hydrolyzing] subunit A (189 aa).

Residues 5–189 (KILVVNNYGQ…TNFLEICEKY (185 aa)) form the Glutamine amidotransferase type-1 domain. Cys79 serves as the catalytic Nucleophile. Residues His166 and Glu168 contribute to the active site.

Heterodimer composed of a glutamine amidotransferase subunit (A) and a GMP-binding subunit (B).

It catalyses the reaction XMP + L-glutamine + ATP + H2O = GMP + L-glutamate + AMP + diphosphate + 2 H(+). It participates in purine metabolism; GMP biosynthesis; GMP from XMP (L-Gln route): step 1/1. Functionally, catalyzes the synthesis of GMP from XMP. This is GMP synthase [glutamine-hydrolyzing] subunit A from Methanosarcina barkeri (strain Fusaro / DSM 804).